A 784-amino-acid polypeptide reads, in one-letter code: MSDQDHSMDEVTAVVKIEKDVGGNNGGSGNGGGAAFSQTRSSSTGSSSSSGGGGGQESQPSPLALLAATCSRIESPNENSNNSQGPSQSGGTGELDLTATQLSQGANGWQIISSSSGATPTSKEQSGNSTNGSNGSESSKNRTVSGGQYVVAATPNLQNQQVLTGLPGVMPNIQYQVIPQFQTVDGQQLQFAATGAQVQQDGSGQIQIIPGANQQIIPNRGSGGNIIAAMPNLLQQAVPLQGLANNVLSGQTQYVTNVPVALNGNITLLPVNSVSAATLTPSSQAGTISSSGSQESSSQPVTSGTAISSASLVSSQASSSSFFTNANSYSTTTTTSNMGIMNFTSSGSSGTSSQGQTPQRVGGLQGSDSLNIQQNQTSGGSLQGSQQKEGEQSQQTQQQQILIQPQLVQGGQALQALQAAPLSGQTFTTQAISQETLQNLQLQAVQNSGPIIIRTPTVGPNGQVSWQTLQLQNLQVQNPQAQTITLAPMQGVSLGQTSSSNTTLTPIASAASIPAGTVTVNAAQLSSMPGLQTINLSALGTSGIQVHQLPGLPLAIANTPGDHGTQLGLHGSGGDGIHDETAGGEGENSSDLQPQAGRRTRREACTCPYCKDSEGRASGDPGKKKQHICHIQGCGKVYGKTSHLRAHLRWHTGERPFMCNWSYCGKRFTRSDELQRHKRTHTGEKKFACPECPKRFMRSDHLSKHIKTHQNKKGGPGVALSVGTLPLDSGAGSEGTATPSALITTNMVAMEAICPEGIARLANSGINVMQVTELQSINISGNGF.

Positions 1–95 are disordered; sequence MSDQDHSMDE…PSQSGGTGEL (95 aa). The residue at position 2 (S2) is an N-acetylserine. A phosphoserine mark is found at S2 and S7. Residues 2-84 are repressor domain; it reads SDQDHSMDEV…SPNENSNNSQ (83 aa). K16 participates in a covalent cross-link: Glycyl lysine isopeptide (Lys-Gly) (interchain with G-Cter in SUMO); alternate. Residue K16 forms a Glycyl lysine isopeptide (Lys-Gly) (interchain with G-Cter in SUMO2); alternate linkage. Residues 23-34 show a composition bias toward gly residues; the sequence is GNNGGSGNGGGA. Over residues 37 to 49 the composition is skewed to low complexity; sequence SQTRSSSTGSSSS. S61 is modified (phosphoserine). Residues 74–87 show a composition bias toward low complexity; sequence ESPNENSNNSQGPS. S103 is subject to Phosphoserine; by ATM. Over residues 111-125 the composition is skewed to polar residues; that stretch reads IISSSSGATPTSKEQ. The disordered stretch occupies residues 111–144; the sequence is IISSSSGATPTSKEQSGNSTNGSNGSESSKNRTV. A compositionally biased stretch (low complexity) spans 126-138; the sequence is SGNSTNGSNGSES. Residues 148-253 form a transactivation domain A (Gln-rich) region; the sequence is QYVVAATPNL…ANNVLSGQTQ (106 aa). Residues 263–497 form a transactivation domain B (Gln-rich) region; it reads NGNITLLPVN…PMQGVSLGQT (235 aa). T280 carries the phosphothreonine; by MAPK8 modification. Disordered stretches follow at residues 282–303 and 333–398; these read SSQA…PVTS and TTTS…QTQQ. Composition is skewed to low complexity over residues 344 to 357 and 373 to 398; these read TSSG…QGQT and QQNQ…QTQQ. T455 bears the Phosphothreonine; by MAPK1 and MAPK3 mark. A 9aaTAD motif is present at residues 464–472; sequence VSWQTLQLQ. O-linked (GlcNAc) serine glycosylation is present at S493. The tract at residues 498–611 is transactivation domain C (highly charged); it reads SSSNTTLTPI…REACTCPYCK (114 aa). The disordered stretch occupies residues 566–598; sequence QLGLHGSGGDGIHDETAGGEGENSSDLQPQAGR. S613 is subject to Phosphoserine; alternate. The O-linked (GlcNAc) serine; alternate glycan is linked to S613. Positions 620–784 are VZV IE62-binding; it reads DPGKKKQHIC…QSINISGNGF (165 aa). 3 consecutive C2H2-type zinc fingers follow at residues 627–656, 657–686, and 687–714; these read HICH…GERP, FMCN…GEKK, and FACP…NKKG. T641 is modified (phosphothreonine; alternate). A glycan (O-linked (GlcNAc) threonine; alternate) is linked at T641. An O-linked (GlcNAc) serine; alternate glycan is attached at S642. S642 is modified (phosphoserine; by PKC/PRKCZ; alternate). T652 is modified (phosphothreonine; by PKC/PRKCZ). T669 carries the post-translational modification Phosphothreonine. S671 carries the post-translational modification Phosphoserine; by PKC/PRKCZ. Phosphothreonine; by PKC/PRKCZ is present on T682. S699 and S703 each carry phosphoserine; alternate. O-linked (GlcNAc) serine; alternate glycosylation is found at S699 and S703. N6-acetyllysine is present on K704. Residues 709 to 784 are domain D; the sequence is HQNKKGGPGV…QSINISGNGF (76 aa). Phosphothreonine; by MAPK1, MAPK3 and MAPK8 is present on T738.

This sequence belongs to the Sp1 C2H2-type zinc-finger protein family. Interacts with ATF7IP, ATF7IP2, BAHD1, POGZ, HCFC1, AATF and PHC2. Interacts with SV40 VP2/3 proteins. Interacts with SV40 major capsid protein VP1; this interaction leads to a cooperativity between the 2 proteins in DNA binding. Interacts with HLTF; the interaction may be required for basal transcriptional activity of HLTF. Interacts (deacetylated form) with EP300; the interaction enhances gene expression. Interacts with HDAC1 and JUN. Interacts with ELF1; the interaction is inhibited by glycosylation of SP1. Interaction with NFYA; the interaction is inhibited by glycosylation of SP1. Interacts with SMARCA4/BRG1. Interacts with ATF7IP and TBP. Interacts with MEIS2 isoform 4 and PBX1 isoform PBX1a. Interacts with EGR1. Interacts with RNF112 in an oxidative stress-regulated manner. Interacts with ZBTB7A; ZBTB7A prevents the binding to GC-rich motifs in promoters and represses the transcriptional activity of SP1. Interacts with DDX3X; this interaction potentiates SP1-induced CDKN1A/WAF1/CIP1 transcription. Interacts with MSX1; the interaction may inhibit MSX1 autoinactivation. Interacts with MSX3. As to quaternary structure, (Microbial infection) Interacts with murine minute virus NS1; this interaction allows high levels of viral P38 promoter transactivation by NS1. In terms of processing, phosphorylated on multiple serine and threonine residues. Phosphorylation is coupled to ubiquitination, sumoylation and proteolytic processing. Phosphorylation on Ser-61 enhances proteolytic cleavage. Phosphorylation on Ser-7 enhances ubiquitination and protein degradation. Hyperphosphorylation on Ser-103 in response to DNA damage has no effect on transcriptional activity. MAPK1/MAPK3-mediated phosphorylation on Thr-455 and Thr-738 enhances VEGF transcription but, represses FGF2-triggered PDGFR-alpha transcription. Also implicated in the repression of RECK by ERBB2. Hyperphosphorylated on Thr-280 and Thr-738 during mitosis by MAPK8 shielding SP1 from degradation by the ubiquitin-dependent pathway. Phosphorylated in the zinc-finger domain by calmodulin-activated PKCzeta. Phosphorylation on Ser-642 by PKCzeta is critical for TSA-activated LHR gene expression through release of its repressor, p107. Phosphorylation on Thr-669, Ser-671 and Thr-682 is stimulated by angiotensin II via the AT1 receptor inducing increased binding to the PDGF-D promoter. This phosphorylation is increased in injured artey wall. Ser-61 and Thr-682 can both be dephosphorylated by PP2A during cell-cycle interphase. Dephosphorylation on Ser-61 leads to increased chromatin association during interphase and increases the transcriptional activity. On insulin stimulation, sequentially glycosylated and phosphorylated on several C-terminal serine and threonine residues. Post-translationally, acetylated. Acetylation/deacetylation events affect transcriptional activity. Deacetylation leads to an increase in the expression of the 12(s)-lipooxygenase gene through recruitment of p300 to the promoter. Deacetylated by HDAC6 which leads to increased expression of ENG and positive regulation of angiogenesis. Ubiquitinated. Ubiquitination occurs on the C-terminal proteolytically-cleaved peptide and is triggered by phosphorylation. In terms of processing, sumoylated with SUMO1. Sumoylation modulates proteolytic cleavage of the N-terminal repressor domain. Sumoylation levels are attenuated during tumorigenesis. Phosphorylation mediates SP1 desumoylation. Post-translationally, proteolytic cleavage in the N-terminal repressor domain is prevented by sumoylation. The C-terminal cleaved product is susceptible to degradation. O-glycosylated; Contains 8 N-acetylglucosamine side chains. Levels are controlled by insulin and the SP1 phosphorylation states. Insulin-mediated O-glycosylation locates SP1 to the nucleus, where it is sequentially deglycosylated and phosphorylated. O-glycosylation affects transcriptional activity through disrupting the interaction with a number of transcription factors including ELF1 and NFYA. Inhibited by peroxisomome proliferator receptor gamma (PPARgamma).

It is found in the nucleus. It localises to the cytoplasm. Transcription factor that can activate or repress transcription in response to physiological and pathological stimuli. Binds with high affinity to GC-rich motifs and regulates the expression of a large number of genes involved in a variety of processes such as cell growth, apoptosis, differentiation and immune responses. Highly regulated by post-translational modifications (phosphorylations, sumoylation, proteolytic cleavage, glycosylation and acetylation). Also binds the PDGFR-alpha G-box promoter. May have a role in modulating the cellular response to DNA damage. Implicated in chromatin remodeling. Plays a role in the recruitment of SMARCA4/BRG1 on the c-FOS promoter Plays an essential role in the regulation of FE65 gene expression. Positively regulates the transcription of the core clock component BMAL1. Plays a role in protecting cells against oxidative stress following brain injury by regulating the expression of RNF112. This chain is Transcription factor Sp1 (Sp1), found in Mus musculus (Mouse).